Reading from the N-terminus, the 254-residue chain is Very-long-chain (3R)-3-hydroxyacyl-CoA dehydratase 2 (254 aa).

The segment covering 1–10 (MAAAAATAAT) has biased composition (low complexity). The disordered stretch occupies residues 1–34 (MAAAAATAATKGNGGGSGRVGAGDSSGARKKKGP). N-acetylalanine is present on Ala-2. At 2–41 (AAAAATAATKGNGGGSGRVGAGDSSGARKKKGPGPVATAY) the chain is on the cytoplasmic side. Over residues 12–21 (GNGGGSGRVG) the composition is skewed to gly residues. A helical membrane pass occupies residues 42-60 (LVIYNVVMTAGWLVIAVGL). The Lumenal portion of the chain corresponds to 61–79 (VRAYLAKGSYHSLYYSIER). Residues 80 to 97 (PLKFFQTGALLEILHCAI) traverse the membrane as a helical segment. Residues 98 to 107 (GIVPSSVVLT) are Cytoplasmic-facing. Residues 108–125 (SFQVMSRVFLIWAVTHSV) traverse the membrane as a helical segment. Over 126–130 (KEVQS) the chain is Lumenal. A helical transmembrane segment spans residues 131-146 (EDSVLLFVIAWTITEI). The Cytoplasmic portion of the chain corresponds to 147 to 169 (IRYSFYTFSLLNHLPYIIKWARY). Residues 170–187 (TLFIVLYPMGVTGELLTI) traverse the membrane as a helical segment. Residues Tyr-176 and Glu-183 contribute to the active site. The Lumenal segment spans residues 188–217 (YAALPFVRQAGLYSISLPNKYNFSFDYHAF). Residues 198 to 214 (GLYSISLPNKYNFSFDY) are may be involved in interaction with TECR. A glycan (N-linked (GlcNAc...) asparagine) is linked at Asn-209. A helical transmembrane segment spans residues 218–235 (LILIMISYIPLFPQLYFH). Residues 236–254 (MIHQRRKVLSHTEEHKKFE) lie on the Cytoplasmic side of the membrane.

This sequence belongs to the very long-chain fatty acids dehydratase HACD family. As to quaternary structure, may interact with enzymes of the ELO family (including ELOVL1); with those enzymes that mediate condensation, the first of the four steps of the reaction cycle responsible for fatty acids elongation, may be part of a larger fatty acids elongase complex. Interacts with BCAP31. Interacts with TECR.

It localises to the endoplasmic reticulum membrane. It carries out the reaction a very-long-chain (3R)-3-hydroxyacyl-CoA = a very-long-chain (2E)-enoyl-CoA + H2O. The enzyme catalyses (3R)-hydroxyhexadecanoyl-CoA = (2E)-hexadecenoyl-CoA + H2O. It catalyses the reaction (3R)-hydroxyoctadecanoyl-CoA = (2E)-octadecenoyl-CoA + H2O. The catalysed reaction is (3R)-hydroxyeicosanoyl-CoA = (2E)-eicosenoyl-CoA + H2O. It carries out the reaction (3R)-hydroxydocosanoyl-CoA = (2E)-docosenoyl-CoA + H2O. The enzyme catalyses (3R)-hydroxytetracosanoyl-CoA = (2E)-tetracosenoyl-CoA + H2O. It catalyses the reaction (3R)-hydroxyhexacosanoyl-CoA = (2E)-hexacosenoyl-CoA + H2O. Its pathway is lipid metabolism; fatty acid biosynthesis. Its function is as follows. Catalyzes the third of the very long-chain fatty acids (VLCFA) elongation four-step cycle (condensation, reduction, dehydration, and reduction). This endoplasmic reticulum-elongation process is characterized by the addition of two carbons to the lipid chain through each cycle. This enzyme catalyzes the dehydration of the 3-hydroxyacyl-CoA intermediate into trans-2,3-enoyl-CoA, within each cycle of elongation. Therefore, it participates in the production of various VLCFAs involved in multiple biological processes as precursors of membrane lipids and lipid mediators. The sequence is that of Very-long-chain (3R)-3-hydroxyacyl-CoA dehydratase 2 from Mus musculus (Mouse).